The primary structure comprises 141 residues: Cholinesterase (141 aa).

An N-linked (GlcNAc...) asparagine glycan is attached at asparagine 39. 49–50 (GS) is a binding site for substrate. The Acyl-ester intermediate role is filled by serine 131. A Phosphoserine modification is found at serine 131.

The protein belongs to the type-B carboxylesterase/lipase family. As to quaternary structure, homotetramer; disulfide-linked. Dimer of dimers. In terms of tissue distribution, present in most cells except erythrocytes.

The protein resides in the secreted. It catalyses the reaction an acylcholine + H2O = a carboxylate + choline + H(+). In terms of biological role, esterase with broad substrate specificity. Contributes to the inactivation of the neurotransmitter acetylcholine. Can degrade neurotoxic organophosphate esters. The chain is Cholinesterase (BCHE) from Ovis aries (Sheep).